Reading from the N-terminus, the 57-residue chain is Cecropin-A (57 aa).

The signal sequence occupies residues 1-21; that stretch reads IFFFVFACLLALSAVSAAPEP.

Belongs to the cecropin family.

The protein localises to the secreted. Cecropins have lytic and antibacterial activity against several Gram-positive and Gram-negative bacteria. In Spodoptera litura (Asian cotton leafworm), this protein is Cecropin-A (CECA).